The chain runs to 308 residues: Isoflavone reductase homolog (308 aa).

NADP(+) contacts are provided by residues 11-17 (GGTGYIG), Arg36, and Lys45. Lys133 serves as the catalytic Proton acceptor. Arg137 contacts NADP(+).

It belongs to the NmrA-type oxidoreductase family. Isoflavone reductase subfamily.

The protein resides in the cytoplasm. The chain is Isoflavone reductase homolog from Solanum tuberosum (Potato).